Reading from the N-terminus, the 46-residue chain is Endochitinase 1A (46 aa).

This sequence belongs to the glycosyl hydrolase 19 family. Chitinase class I subfamily.

It catalyses the reaction Random endo-hydrolysis of N-acetyl-beta-D-glucosaminide (1-&gt;4)-beta-linkages in chitin and chitodextrins.. Defense against chitin-containing fungal and bacterial pathogens. The polypeptide is Endochitinase 1A (Arachis hypogaea (Peanut)).